We begin with the raw amino-acid sequence, 955 residues long: Protein translocase subunit SecA (955 aa).

ATP contacts are provided by residues Gln87, 105–109 (GEGKT), and Asp494. Residues 861 to 955 (AAPAPAAPRP…KKAPRTKRKR (95 aa)) are disordered. A compositionally biased stretch (low complexity) spans 874-888 (QEAAQQAQGTAAPSA). The segment covering 943 to 955 (SKGKKAPRTKRKR) has biased composition (basic residues).

This sequence belongs to the SecA family. As to quaternary structure, monomer and homodimer. Part of the essential Sec protein translocation apparatus which comprises SecA, SecYEG and auxiliary proteins SecDF. Other proteins may also be involved.

The protein resides in the cell membrane. It localises to the cytoplasm. The catalysed reaction is ATP + H2O + cellular proteinSide 1 = ADP + phosphate + cellular proteinSide 2.. Functionally, part of the Sec protein translocase complex. Interacts with the SecYEG preprotein conducting channel. Has a central role in coupling the hydrolysis of ATP to the transfer of proteins into and across the cell membrane, serving as an ATP-driven molecular motor driving the stepwise translocation of polypeptide chains across the membrane. This Rhodococcus opacus (strain B4) protein is Protein translocase subunit SecA.